The sequence spans 250 residues: Replicating protein (250 aa).

Disordered regions lie at residues 1–23 and 168–250; these read MFQQIGAVQAKSGTDEPAHPCEK and KAHM…KAFE. Basic and acidic residues-rich tracts occupy residues 13 to 23 and 178 to 190; these read GTDEPAHPCEK and DRLRETVEDRTRA. The segment covering 218-237 has biased composition (polar residues); it reads SRCSFTTPNRPRRTLPSSHP.

Functionally, required for replication. It likely regulates pTAR copy number. This Rhizobium radiobacter (Agrobacterium tumefaciens) protein is Replicating protein (repA).